A 1007-amino-acid polypeptide reads, in one-letter code: Calmodulin-binding transcription activator 1 (1007 aa).

Positions 18-144 (MEQLLSEAQH…YLEVKGNRTS (127 aa)) form a DNA-binding region, CG-1. Residues 148 to 164 (KENNSNSVNGTASVNID) show a composition bias toward polar residues. A disordered region spans residues 148–227 (KENNSNSVNG…VHGNRVRESD (80 aa)). The span at 165-176 (STASPTSTLSSL) shows a compositional bias: low complexity. The segment covering 183–202 (GDSQQASSVLRPSPEPQTGN) has biased composition (polar residues). The segment at 233–398 (DVRALDTVGN…TVECETAAAG (166 aa)) is transcription activation. ANK repeat units lie at residues 612–641 (DGQGILHFVAALGYDWAIKPVLAAGVNINF) and 645–674 (NGWSALHWAAFSGREETVAVLVSLGADAGA). IQ domains follow at residues 821–850 (LSCAATHIQKKYRGWKKRKEFLLIRQRIVK) and 844–873 (IRQRIVKIQAHVRGHQVRKQYRTVIWSVGL). A calmodulin-binding region spans residues 869–891 (WSVGLLEKIILRWRRKGNGLRGF). A coiled-coil region spans residues 915-943 (QEDEYDYLKEGRKQTEERLQKALTRVKSM). Position 942 is a phosphoserine (Ser-942).

Belongs to the CAMTA family. As to expression, expressed in roots, stems, leaves, pollen and siliques.

The protein localises to the nucleus. In terms of biological role, transcription activator that binds calmodulin in a calcium-dependent manner in vitro. Binds to the DNA consensus sequence 5'-[ACG]CGCG[GTC]-3'. Regulates transcriptional activity in response to calcium signals. Involved in freezing tolerance. Involved in freezing tolerance in association with CAMTA2 and CAMTA3. Contributes together with CAMTA2 and CAMTA3 to the positive regulation of the cold-induced expression of DREB1A/CBF3, DREB1B/CBF1 and DREB1C/CBF2. Involved in drought stress responses by regulating several drought-responsive genes. Involved in auxin signaling and responses to abiotic stresses. Activates the expression of the V-PPase proton pump AVP1 in pollen. This Arabidopsis thaliana (Mouse-ear cress) protein is Calmodulin-binding transcription activator 1.